The sequence spans 118 residues: KLAAVAVATLLAAGFGVTTAGSASAATSPSQLCGGYSTSEPMLSQDDSGDAVKALQCELYNSLAYMGPDVDGYFGPKTLAAVQKFQTCTGLKPDGIVGPLTWAKLDYQSSQGTTPVWC.

This is an uncharacterized protein from Kitasatospora aureofaciens (Streptomyces aureofaciens).